We begin with the raw amino-acid sequence, 218 residues long: Chromophore lyase CpcT/CpeT 1 (218 aa).

It belongs to the CpcT/CpeT biliprotein lyase family.

Covalently attaches a chromophore to Cys residue(s) of phycobiliproteins. The polypeptide is Chromophore lyase CpcT/CpeT 1 (Synechococcus sp. (strain JA-3-3Ab) (Cyanobacteria bacterium Yellowstone A-Prime)).